Here is a 1697-residue protein sequence, read N- to C-terminus: Histone acetyltransferase HAC1 (1697 aa).

The segment covering 1 to 16 (MNVQAHMSGQVSNQGT) has biased composition (polar residues). Disordered stretches follow at residues 1 to 45 (MNVQ…LGPS), 202 to 221 (SNFGLGSGGNMSSMSSQRNT), 385 to 439 (SFQA…QQQR), 555 to 574 (HWQSQSQEHTQMSNSMSNER), 583 to 631 (RMSG…GNRD), and 843 to 901 (IGIA…GKPE). 2 stretches are compositionally biased toward low complexity: residues 17 to 28 (MSQQNGNSQMQN) and 202 to 217 (SNFGLGSGGNMSSMSS). Positions 385 to 398 (SFQAVSRTSSSLSH) are enriched in polar residues. The span at 399-439 (QQQQFQQQPNRFQQQPNQFHQQQQQFLHQQQLKQQSQQQQR) shows a compositional bias: low complexity. Composition is skewed to polar residues over residues 556–571 (WQSQSQEHTQMSNSMS) and 584–628 (MSGT…NGNG). The segment at 629 to 709 (NRDPRFKNQQ…EPNCPVCIPV (81 aa)) adopts a TAZ-type 1 zinc-finger fold. Basic and acidic residues predominate over residues 873–901 (TKVEKEPESLKKENLAESTEHTSKSGKPE). A PHD-type zinc finger spans residues 989-1066 (HYFCIPCYNE…EYTCPYCFIA (78 aa)). Residues 1081-1517 (VLGAKDLPRT…VLYHLHNPTA (437 aa)) enclose the CBP/p300-type HAT domain. Residues 1204 to 1206 (LDS), 1223 to 1224 (RT), and tryptophan 1279 contribute to the acetyl-CoA site. ZZ-type zinc fingers lie at residues 1399–1462 (HLQP…IMDI) and 1519–1572 (AFVT…SLAD). Positions 1404, 1407, 1419, 1422, 1428, 1431, 1444, 1452, 1524, 1527, 1539, 1542, 1548, 1551, 1560, and 1562 each coordinate Zn(2+). The segment at 1579–1662 (EARQLRVLQL…ECHVPRCRDL (84 aa)) adopts a TAZ-type 2 zinc-finger fold.

Rosette leaves, stems and flowers.

It is found in the nucleus. It carries out the reaction L-lysyl-[protein] + acetyl-CoA = N(6)-acetyl-L-lysyl-[protein] + CoA + H(+). Its function is as follows. Acetyltransferase enzyme. Acetylates histones, giving a specific tag for transcriptional activation. The sequence is that of Histone acetyltransferase HAC1 (HAC1) from Arabidopsis thaliana (Mouse-ear cress).